Consider the following 242-residue polypeptide: Probable transcriptional regulatory protein PXO_01555 (242 aa).

Belongs to the TACO1 family.

The protein resides in the cytoplasm. The chain is Probable transcriptional regulatory protein PXO_01555 from Xanthomonas oryzae pv. oryzae (strain PXO99A).